A 285-amino-acid polypeptide reads, in one-letter code: Homeobox protein vex1 (285 aa).

Disordered regions lie at residues 30 to 54 (KSGN…LPSV) and 69 to 88 (NEER…APQE). Basic and acidic residues predominate over residues 69–80 (NEERSPPVKDQL). Residues 131–190 (AARARTKFSPEQLEELERSFKENRYIGSSEKRRLSKVLKLSETQIKTWFQNRRMKFKRQT) constitute a DNA-binding region (homeobox).

Widely expressed in the embryo prior to gastrulation. Becomes restricted to the ventral marginal zone by mid/late gastrulation. Ventral localization persists during gastrulation and neurulation in the ventral region of the closed blastopore and in the proctodeum during tail bud stages.

It is found in the nucleus. Its function is as follows. Transcriptional repressor. Acts in a ventral signaling pathway downstream of bmp4 to antagonize the Spemann organizer and ventrally pattern the embryonic mesoderm. Represses transcription of the dorsal genes gsc and otx2. The polypeptide is Homeobox protein vex1 (Xenopus laevis (African clawed frog)).